We begin with the raw amino-acid sequence, 197 residues long: Dephospho-CoA kinase (197 aa).

The DPCK domain occupies 2-197 (IIGLTGGIGS…HTKYMELLNE (196 aa)). 10–15 (GSGKSA) provides a ligand contact to ATP.

It belongs to the CoaE family.

It is found in the cytoplasm. It catalyses the reaction 3'-dephospho-CoA + ATP = ADP + CoA + H(+). The protein operates within cofactor biosynthesis; coenzyme A biosynthesis; CoA from (R)-pantothenate: step 5/5. Catalyzes the phosphorylation of the 3'-hydroxyl group of dephosphocoenzyme A to form coenzyme A. The protein is Dephospho-CoA kinase of Gamma-proteobacterium EBAC31A08.